A 107-amino-acid polypeptide reads, in one-letter code: C-X-C motif chemokine 3 (107 aa).

An N-terminal signal peptide occupies residues 1 to 34 (MAHATLSAAPSNPRLLRVALLLLLLVAASRRAAG). Cystine bridges form between C43–C69 and C45–C85.

This sequence belongs to the intercrine alpha (chemokine CxC) family. N-terminal processed form GRO-gamma(5-73) is produced by proteolytic cleavage after secretion from peripheral blood monocytes.

The protein resides in the secreted. Functionally, ligand for CXCR2. Has chemotactic activity for neutrophils. May play a role in inflammation and exert its effects on endothelial cells in an autocrine fashion. In vitro, the processed form GRO-gamma(5-73) shows a fivefold higher chemotactic activity for neutrophilic granulocytes. This is C-X-C motif chemokine 3 (CXCL3) from Homo sapiens (Human).